An 86-amino-acid chain; its full sequence is Small ribosomal subunit protein uS17 (86 aa).

The protein belongs to the universal ribosomal protein uS17 family. In terms of assembly, part of the 30S ribosomal subunit.

One of the primary rRNA binding proteins, it binds specifically to the 5'-end of 16S ribosomal RNA. The protein is Small ribosomal subunit protein uS17 of Tropheryma whipplei (strain TW08/27) (Whipple's bacillus).